The chain runs to 206 residues: Large ribosomal subunit protein uL3 (206 aa).

Positions 122–154 are disordered; that stretch reads VVKRHGHAGGPGGHGSRFHRHPGSMGANSTPSR.

Belongs to the universal ribosomal protein uL3 family. As to quaternary structure, part of the 50S ribosomal subunit. Forms a cluster with proteins L14 and L19.

In terms of biological role, one of the primary rRNA binding proteins, it binds directly near the 3'-end of the 23S rRNA, where it nucleates assembly of the 50S subunit. In Leptospira borgpetersenii serovar Hardjo-bovis (strain JB197), this protein is Large ribosomal subunit protein uL3.